Consider the following 85-residue polypeptide: Contulakin-Lt1 (85 aa).

An N-terminal signal peptide occupies residues 1–22 (MRTAYWVMVMMMVGITAPLSEG). A propeptide spanning residues 23 to 60 (RKLNDAIRGLVADYLTPQLLQSLVSAPYPEFQLDDPNL) is cleaved from the precursor. Cys65 and Cys70 are oxidised to a cystine. Positions 76–85 (RRRDLKKRNK) are excised as a propeptide.

The protein belongs to the conotoxin C superfamily. In terms of tissue distribution, expressed by the venom duct.

The protein localises to the secreted. Functionally, acts as an agonist of neurotensin receptors. It binds to human neurotensin type 1 receptor (NTSR1), rat neurotensin types 1 and 2 receptors (NTSR1/NTSR2) and mouse neurotensin type 3 receptor (SORT1). The protein is Contulakin-Lt1 of Conus litteratus (Lettered cone).